We begin with the raw amino-acid sequence, 279 residues long: Dermonecrotic toxin LspiSicTox-betaIE3i (279 aa).

The active site involves H5. Positions 25 and 27 each coordinate Mg(2+). H41 functions as the Nucleophile in the catalytic mechanism. 2 cysteine pairs are disulfide-bonded: C45–C51 and C47–C190. D85 is a Mg(2+) binding site.

The protein belongs to the arthropod phospholipase D family. Class II subfamily. Requires Mg(2+) as cofactor. In terms of tissue distribution, expressed by the venom gland.

It localises to the secreted. It catalyses the reaction an N-(acyl)-sphingosylphosphocholine = an N-(acyl)-sphingosyl-1,3-cyclic phosphate + choline. The enzyme catalyses an N-(acyl)-sphingosylphosphoethanolamine = an N-(acyl)-sphingosyl-1,3-cyclic phosphate + ethanolamine. It carries out the reaction a 1-acyl-sn-glycero-3-phosphocholine = a 1-acyl-sn-glycero-2,3-cyclic phosphate + choline. The catalysed reaction is a 1-acyl-sn-glycero-3-phosphoethanolamine = a 1-acyl-sn-glycero-2,3-cyclic phosphate + ethanolamine. Its function is as follows. Dermonecrotic toxins cleave the phosphodiester linkage between the phosphate and headgroup of certain phospholipids (sphingolipid and lysolipid substrates), forming an alcohol (often choline) and a cyclic phosphate. This toxin acts on sphingomyelin (SM). It may also act on ceramide phosphoethanolamine (CPE), lysophosphatidylcholine (LPC) and lysophosphatidylethanolamine (LPE), but not on lysophosphatidylserine (LPS), and lysophosphatidylglycerol (LPG). It acts by transphosphatidylation, releasing exclusively cyclic phosphate products as second products. Induces dermonecrosis, hemolysis, increased vascular permeability, edema, inflammatory response, and platelet aggregation. This Loxosceles spinulosa (Recluse spider) protein is Dermonecrotic toxin LspiSicTox-betaIE3i.